We begin with the raw amino-acid sequence, 131 residues long: Large ribosomal subunit protein bL19 (131 aa).

This sequence belongs to the bacterial ribosomal protein bL19 family.

Its function is as follows. This protein is located at the 30S-50S ribosomal subunit interface and may play a role in the structure and function of the aminoacyl-tRNA binding site. This chain is Large ribosomal subunit protein bL19, found in Afipia carboxidovorans (strain ATCC 49405 / DSM 1227 / KCTC 32145 / OM5) (Oligotropha carboxidovorans).